We begin with the raw amino-acid sequence, 681 residues long: MPLTESAWNESVGWFSSDHKYSTSSNKMRGEEASGTVLHRLIQEQLRYGNPTDAHTLLAIQQQALRRGGGAASSSQSSSESLSQDEPHSPQLSTRQEPQGQEHQVDYQHSENYTTYPHHQEELPTYEQAKAHSQYLASQWCLPHRVCSLQDSVAIQKPCEEQDSWDMKQGHVRSISDRLLHFSMESGKMPCSASYPQINGYHANQHLQYNQQGLEYNKLAPYTEYPFSVEYENGYKAPPPFHSQHNRLPTPEVCHRLSTSPPAGREVNACSRSQLEMLMNENKRLRQELEGQTEKALKIQKLEQEIQRISEAYDTLMKGCAKREALEQALRNKLMAEIKRLQHSSVQAAKQAEAADQNQHAIEKLHLQNEEQKLRCACLEQEVQHLRNEAEKHQRRSEALESTLRSTQTRSQQLWTELQRKRAYVEKVERLQGALTQLQATCEKREGLEMRLRTRLEQELRSLRNQQRQPQPVGGTSHVSVYTLQENLREKEERILSLEADKIRWEQKYLEEKTMREFAMDAAATAAAQRDTTIINHSPCHSFIEELPSTEYRNQEVENRIRSLYAQILEKDTVISILKQKLQHEQKGQLGALQPATADSSIISSHSTPAHTAQGKERSHFNDQAAGTLHSSHAPVEALAHTTDQTPHTEAKPKNIQKAPSAVDLFKGVDDVSAEAVEIFI.

A compositionally biased stretch (low complexity) spans Gly-68–Gln-84. A disordered region spans residues Gly-68–Asp-106. The segment covering Pro-90–Glu-102 has biased composition (polar residues). Phosphotyrosine; by FGFR1 is present on Tyr-126. Coiled-coil stretches lie at residues Asn-268–Gly-319, Ile-362–Thr-441, and Val-481–Lys-508. Residues Gln-589 to Arg-618 are disordered. The span at Thr-597 to His-611 shows a compositional bias: polar residues. A PDZ-binding motif is present at residues Glu-678–Ile-681.

It belongs to the angiomotin family. In terms of assembly, interacts with SRC. In terms of processing, phosphorylation at Tyr-126 is necessary for efficient binding to SRC and synergistically functioning with SRC to activate the downstream MAPK pathway. Expressed in endothelial cells.

The protein resides in the recycling endosome. It localises to the cytoplasm. The protein localises to the cell projection. Its subcellular location is the podosome. It is found in the cell junction. Functionally, required for proper architecture of actin filaments and for cell movements during embryogenesis. Plays a role in the radial actin fiber architecture in skin epithelial cells, thereby maintains cell geometry, size and cell interconnectivity within the skin. Plays an important role in coupling actin fibers to cell junctions in endothelial cells and is therefore required for correct endothelial cell morphology and maintenance of dorsal aorta lumen expansion during embryogenesis. May further play a role in the polarity, proliferation and migration of endothelial cells, and therefore participates in angiogenesis. May regulate the translocation of phosphorylated SRC to peripheral cell-matrix adhesion sites. This Danio rerio (Zebrafish) protein is Angiomotin-like 2b.